The primary structure comprises 229 residues: Potassium/proton antiporter CemA (229 aa).

3 consecutive transmembrane segments (helical) span residues 6–26, 107–127, and 189–209; these read AFIPFFYFTSIVFLPWLISLC, ILHFSTNLISFVILSGYSFWA, and ILSGLVSTFPVILDTIFKYWI.

Belongs to the CemA family.

Its subcellular location is the plastid. It is found in the chloroplast inner membrane. The catalysed reaction is K(+)(in) + H(+)(out) = K(+)(out) + H(+)(in). Functionally, contributes to K(+)/H(+) antiport activity by supporting proton efflux to control proton extrusion and homeostasis in chloroplasts in a light-dependent manner to modulate photosynthesis. Prevents excessive induction of non-photochemical quenching (NPQ) under continuous-light conditions. Indirectly promotes efficient inorganic carbon uptake into chloroplasts. This is Potassium/proton antiporter CemA from Crucihimalaya wallichii (Rock-cress).